A 220-amino-acid chain; its full sequence is Protein myomaker (220 aa).

M1 is a topological domain (extracellular). A helical membrane pass occupies residues 2 to 22 (GAFIAKMLLPTISSLVFVPAA). Over 23–37 (SVAAKRGFHMEAMVY) the chain is Cytoplasmic. A helical transmembrane segment spans residues 38-58 (FFTMFFTAIYHACDGPGLSIL). Topologically, residues 59–64 (CFMKYD) are extracellular. The chain crosses the membrane as a helical span at residues 65–85 (ILEYFSVYGTAISMWVTLLAL). The Cytoplasmic portion of the chain corresponds to 86-93 (GDFDEPKR). A helical transmembrane segment spans residues 94 to 110 (SSLTMFGVLTAAVRIYQ). Residues 111–112 (DR) lie on the Extracellular side of the membrane. Residues 113-133 (LGYGIYSGPIGTAVFMITVKW) traverse the membrane as a helical segment. The Cytoplasmic portion of the chain corresponds to 134 to 153 (LQKMKEKKGLYPDKSVYTQQ). The chain crosses the membrane as a helical span at residues 154-174 (VGPGCCFGALALMLRFYFEEW). Residue D175 is a topological domain, extracellular. A helical transmembrane segment spans residues 176-196 (YAYVHSFYHVSLAMSFILLLP). The Cytoplasmic segment spans residues 197–220 (KKNRYAGTGRNAAKLNCYTLCCCV).

This sequence belongs to the TMEM8 family.

It is found in the cell membrane. Myoblast-specific protein that mediates myoblast fusion, an essential step for the formation of multi-nucleated muscle fibers. Actively participates in the membrane fusion reaction by mediating the mixing of cell membrane lipids (hemifusion) upstream of mymx. The sequence is that of Protein myomaker from Danio rerio (Zebrafish).